An 899-amino-acid chain; its full sequence is Plasma membrane ATPase (899 aa).

The disordered stretch occupies residues Met1–Asp72. Residues Met1–Lys96 are Cytoplasmic-facing. The segment covering Asp17–Ile29 has biased composition (acidic residues). The chain crosses the membrane as a helical span at residues Phe97–Ala117. Over Gly118 to Asp121 the chain is Extracellular. The chain crosses the membrane as a helical span at residues Trp122–Ile141. Topologically, residues Gln142 to Asn272 are cytoplasmic. Residues Gly273–Phe294 form a helical membrane-spanning segment. The Extracellular segment spans residues Tyr295 to Arg305. A helical transmembrane segment spans residues Tyr306 to Ala328. Residues Val329–Ile700 lie on the Cytoplasmic side of the membrane. Asp359 (4-aspartylphosphate intermediate) is an active-site residue. 2 residues coordinate Mg(2+): Asp615 and Asp619. A helical transmembrane segment spans residues Asp701–Tyr719. Over Asp720 to Arg735 the chain is Extracellular. Residues Leu736–Leu755 traverse the membrane as a helical segment. Over Thr756 to Gln805 the chain is Cytoplasmic. A helical transmembrane segment spans residues Leu806 to Trp826. Topologically, residues Ser827–Arg838 are extracellular. Residues Val839 to Tyr855 form a helical membrane-spanning segment. Residues Met856–Asn899 are Cytoplasmic-facing.

The protein belongs to the cation transport ATPase (P-type) (TC 3.A.3) family. Type IIIA subfamily.

Its subcellular location is the cell membrane. It carries out the reaction ATP + H2O + H(+)(in) = ADP + phosphate + 2 H(+)(out). Its activity is regulated as follows. Activated by high pH or also by potassium ions when the medium pH is low. Functionally, the plasma membrane ATPase of plants and fungi is a hydrogen ion pump. The proton gradient it generates drives the active transport of nutrients by H(+)-symport. The resulting external acidification and/or internal alkinization may mediate growth responses. This chain is Plasma membrane ATPase (PMA1), found in Kluyveromyces lactis (strain ATCC 8585 / CBS 2359 / DSM 70799 / NBRC 1267 / NRRL Y-1140 / WM37) (Yeast).